The sequence spans 290 residues: 4-diphosphocytidyl-2-C-methyl-D-erythritol kinase (290 aa).

K10 is a catalytic residue. Position 96–106 (96–106) interacts with ATP; sequence PIAAGLGGGSS. Residue D138 is part of the active site.

This sequence belongs to the GHMP kinase family. IspE subfamily.

The enzyme catalyses 4-CDP-2-C-methyl-D-erythritol + ATP = 4-CDP-2-C-methyl-D-erythritol 2-phosphate + ADP + H(+). It participates in isoprenoid biosynthesis; isopentenyl diphosphate biosynthesis via DXP pathway; isopentenyl diphosphate from 1-deoxy-D-xylulose 5-phosphate: step 3/6. Its function is as follows. Catalyzes the phosphorylation of the position 2 hydroxy group of 4-diphosphocytidyl-2C-methyl-D-erythritol. The sequence is that of 4-diphosphocytidyl-2-C-methyl-D-erythritol kinase from Caulobacter vibrioides (strain NA1000 / CB15N) (Caulobacter crescentus).